The following is a 131-amino-acid chain: Runt-related transcription factor 2 (131 aa).

Residues 1–10 (MRVGVPPQIP) form the Runt domain. Residues 1–75 (MRVGVPPQIP…SSTRGTGLPV (75 aa)) are disordered. Position 11 is an asymmetric dimethylarginine (Arg11). Composition is skewed to polar residues over residues 13-36 (SLNS…RQAQ) and 43-70 (YDQS…STRG).

In terms of assembly, heterodimer of an alpha and a beta subunit. The alpha subunit binds DNA as a monomer and through the Runt domain. DNA-binding is increased by heterodimerization. Interacts with XRCC6 (Ku70) and XRCC5 (Ku80). Interacts with CCNB1, KAT6A and KAT6B. Interacts with HIVEP3. Interacts with IFI204. Interaction with SATB2; the interaction results in enhanced DNA binding and transactivation by these transcription factors. Binds to HIPK3. Interacts with FOXO1 (via a C-terminal region); the interaction inhibits RUNX2 transcriptional activity towards BGLAP. This interaction is prevented on insulin or IGF1 stimulation as FOXO1 is exported from the nucleus. Interacts with FOXP3. Interacts with TMEM119. Interacts with OLFM2. Interacts with IPO7; the interaction inhibits RUNX2 nuclear translocation in osteoblasts. Post-translationally, phosphorylated; probably by MAP kinases (MAPK). Phosphorylation by HIPK3 is required for the SPEN/MINT and FGF2 transactivation during osteoblastic differentiation.

The protein localises to the nucleus. The protein resides in the cytoplasm. In terms of biological role, transcription factor involved in osteoblastic differentiation and skeletal morphogenesis. Essential for the maturation of osteoblasts and both intramembranous and endochondral ossification. CBF binds to the core site, 5'-PYGPYGGT-3', of a number of enhancers and promoters, including murine leukemia virus, polyomavirus enhancer, T-cell receptor enhancers, osteocalcin, osteopontin, bone sialoprotein, alpha 1(I) collagen, LCK, IL-3 and GM-CSF promoters. Inhibits KAT6B-dependent transcriptional activation. In osteoblasts, supports transcription activation: synergizes with SPEN/MINT to enhance FGFR2-mediated activation of the osteocalcin FGF-responsive element (OCFRE). This is Runt-related transcription factor 2 (RUNX2) from Equus caballus (Horse).